The primary structure comprises 116 residues: Large ribosomal subunit protein bL17 (116 aa).

The protein belongs to the bacterial ribosomal protein bL17 family. Part of the 50S ribosomal subunit. Contacts protein L32.

The polypeptide is Large ribosomal subunit protein bL17 (Chloroflexus aggregans (strain MD-66 / DSM 9485)).